Reading from the N-terminus, the 300-residue chain is Cation-efflux pump FieF (300 aa).

The next 4 membrane-spanning stretches (helical) occupy residues 12-32 (AAIAATAMASLLLLIKIFAWW), 39-59 (ILAALVDSLVDIGASLTNLLV), 82-102 (AALAQSMFISGSALFLFLTGI), and 114-134 (PGVGVIVTIVALICTIILVSF). 2 residues coordinate Zn(2+): aspartate 45 and aspartate 49. Histidine 153 and aspartate 157 together coordinate Zn(2+). 2 helical membrane-spanning segments follow: residues 156–176 (SDVMMNGAILLALGLSWYGWH) and 178–198 (ADALFALGIGIYILYSALRMG).

This sequence belongs to the cation diffusion facilitator (CDF) transporter (TC 2.A.4) family. FieF subfamily. Homodimer.

It localises to the cell inner membrane. It catalyses the reaction Zn(2+)(in) + H(+)(out) = Zn(2+)(out) + H(+)(in). The enzyme catalyses Cd(2+)(in) + H(+)(out) = Cd(2+)(out) + H(+)(in). The catalysed reaction is Fe(2+)(in) + H(+)(out) = Fe(2+)(out) + H(+)(in). Its function is as follows. Divalent metal cation transporter which exports Zn(2+), Cd(2+) and possibly Fe(2+). May be involved in zinc and iron detoxification by efflux. This Shigella boydii serotype 18 (strain CDC 3083-94 / BS512) protein is Cation-efflux pump FieF.